A 166-amino-acid polypeptide reads, in one-letter code: uncharacterized protein (166 aa).

It to M.jannaschii MJ0992.

This is an uncharacterized protein from Methanocaldococcus jannaschii (strain ATCC 43067 / DSM 2661 / JAL-1 / JCM 10045 / NBRC 100440) (Methanococcus jannaschii).